The sequence spans 301 residues: Mitochondrial carnitine/acylcarnitine carrier protein (301 aa).

Ala-2 is subject to N-acetylalanine. The Cytoplasmic segment spans residues 2–12; that stretch reads ADQPKPISPLK. 3 Solcar repeats span residues 8–99, 108–196, and 207–293; these read ISPL…GKKL, LSYP…LKNI, and LSAP…AMKF. The helical transmembrane segment at 13–31 threads the bilayer; that stretch reads NLLAGGFGGVCLVFVGHPL. The Mitochondrial matrix portion of the chain corresponds to 32-73; sequence DTVKVRLQTQPPSLPGQPPMYSGTFDCFRKTLFREGITGLYR. Residues 74–93 form a helical membrane-spanning segment; the sequence is GMAAPIIGVTPMFAVCFFGF. At 94–112 the chain is on the cytoplasmic side; sequence GLGKKLQQKHPEDVLSYPQ. The chain crosses the membrane as a helical span at residues 113 to 131; it reads LFAAGMLSGVFTTGIMTPG. The Mitochondrial matrix segment spans residues 132-170; it reads ERIKCLLQIQASSGESKYTGTLDCAKKLYQEFGIRGIYK. An N6-acetyllysine mark is found at Lys-148 and Lys-157. Residue Lys-170 is modified to N6-acetyllysine; alternate. The residue at position 170 (Lys-170) is an N6-succinyllysine; alternate. A helical membrane pass occupies residues 171-190; the sequence is GTVLTLMRDVPASGMYFMTY. Topologically, residues 191-211 are cytoplasmic; that stretch reads EWLKNIFTPEGKRVSELSAPR. A helical transmembrane segment spans residues 212–230; it reads ILVAGGIAGIFNWAVAIPP. At 231 to 267 the chain is on the mitochondrial matrix side; sequence DVLKSRFQTAPPGKYPNGFRDVLRELIRDEGVTSLYK. The chain crosses the membrane as a helical span at residues 268 to 287; that stretch reads GFNAVMIRAFPANAACFLGF. The Cytoplasmic portion of the chain corresponds to 288–301; the sequence is EVAMKFLNWATPNL.

It belongs to the mitochondrial carrier (TC 2.A.29) family.

It is found in the mitochondrion inner membrane. The enzyme catalyses O-acetyl-(R)-carnitine(in) + (R)-carnitine(out) = O-acetyl-(R)-carnitine(out) + (R)-carnitine(in). It catalyses the reaction an O-acyl-(R)-carnitine(in) + (R)-carnitine(out) = an O-acyl-(R)-carnitine(out) + (R)-carnitine(in). The catalysed reaction is O-propanoyl-(R)-carnitine(in) + (R)-carnitine(out) = O-propanoyl-(R)-carnitine(out) + (R)-carnitine(in). It carries out the reaction O-hexadecanoyl-(R)-carnitine(in) + (R)-carnitine(out) = O-hexadecanoyl-(R)-carnitine(out) + (R)-carnitine(in). The enzyme catalyses O-octanoyl-(R)-carnitine(in) + (R)-carnitine(out) = O-octanoyl-(R)-carnitine(out) + (R)-carnitine(in). It catalyses the reaction (R)-carnitine(in) = (R)-carnitine(out). Functionally, mediates the electroneutral exchange of acylcarnitines (O-acyl-(R)-carnitine or L-acylcarnitine) of different acyl chain lengths (ranging from O-acetyl-(R)-carnitine to long-chain O-acyl-(R)-carnitines) with free carnitine ((R)-carnitine or L-carnitine) across the mitochondrial inner membrane, via a ping-pong mechanism. Key player in the mitochondrial oxidation pathway, it translocates the fatty acids in the form of acylcarnitines into the mitochondrial matrix, where the carnitine palmitoyltransferase 2 (CPT-2) activates them to undergo fatty acid beta-oxidation. Catalyzes the unidirectional transport (uniport) of carnitine at lower rates than the antiport (exchange). The protein is Mitochondrial carnitine/acylcarnitine carrier protein of Homo sapiens (Human).